Reading from the N-terminus, the 448-residue chain is uncharacterized protein (448 aa).

At 1–50 (MAPEIFVKFKCASRDIKLLWASVFLRLLSYGLTNQVLTLFLNAINMTEDK) the chain is on the extracellular side. Residues 51 to 71 (IGLFMSLTLAGDVICSYILTW) form a helical membrane-spanning segment. Residues 72–93 (YADSWGRRRVLVYGCAMMLLSG) lie on the Cytoplasmic side of the membrane. Residues 94-114 (LVFSFSENFTLLLVFAIFGVI) traverse the membrane as a helical segment. At 115–146 (SPSSDEVGPFKSIEEAMIAHLSPHNARPEIYA) the chain is on the extracellular side. The helical transmembrane segment at 147–167 (IHALVGTIGSALGAIICGIFV) threads the bilayer. The Cytoplasmic segment spans residues 168-184 (DLLKRTGLAATDLQCYK). A helical transmembrane segment spans residues 185–205 (LVFLLYAFFAFCKMVIMLLLS). At 206–260 (DATELDGHYEHTDCNEETAEPLDVNDETAPLMRQATHPEERSNKLSKETVSVLMK) the chain is on the extracellular side. The helical transmembrane segment at 261–281 (LLVIFMVDSLGSGFMTSGWMV) threads the bilayer. The Cytoplasmic portion of the chain corresponds to 282–287 (YYYSKQ). A helical transmembrane segment spans residues 288–308 (FLMGSLALGTLFFITQLVMAS). The Extracellular segment spans residues 309 to 333 (STIPSSIIARCFGPVRATLLVQIPS). The chain crosses the membrane as a helical span at residues 334–354 (GIFSILIPMAKNYLPLSILFL). Topologically, residues 355 to 386 (NLHFATTAMDVTPRQILLTNIIKPRDLTKVMG) are cytoplasmic. Residue 386-393 (GVVNIGKT) participates in ATP binding. Residues 387–407 (VVNIGKTFARCVGPIFTGILA) form a helical membrane-spanning segment. Residues 408 to 416 (NNNYLWLCY) are Extracellular-facing. Residues 417-437 (IISGSLVITADLILACMFLGV) traverse the membrane as a helical segment. The Cytoplasmic portion of the chain corresponds to 438-448 (DAKIKKQMNRH).

It is found in the membrane. This is an uncharacterized protein from Saccharomyces cerevisiae (strain ATCC 204508 / S288c) (Baker's yeast).